The sequence spans 355 residues: Guanine nucleotide-binding protein G(q) subunit alpha (355 aa).

The S-palmitoyl cysteine moiety is linked to residue Cys-3. The G-alpha domain maps to 32-355; that stretch reads KEIKLLLLGT…QHITEVVPGL (324 aa). A G1 motif region spans residues 35–48; the sequence is KLLLLGTGESGKST. GTP contacts are provided by residues 40–47, 174–180, 199–203, 269–272, and Ala-326; these read GTGESGKS, LRVRVPT, DVGGQ, and NKKD. Ser-47 and Thr-180 together coordinate Mg(2+). The interval 172–180 is G2 motif; it reads DVLRVRVPT. The G3 motif stretch occupies residues 195–204; sequence FKMVDVGGQR. The tract at residues 265-272 is G4 motif; sequence ILFLNKKD. The interval 324 to 329 is G5 motif; the sequence is TCATDT.

It belongs to the G-alpha family. G(q) subfamily. In terms of assembly, g proteins are composed of 3 units; alpha, beta and gamma. The alpha chain contains the guanine nucleotide binding site.

Its function is as follows. Guanine nucleotide-binding proteins (G proteins) are involved as modulators or transducers in various transmembrane signaling systems. This Geodia cydonium (Sponge) protein is Guanine nucleotide-binding protein G(q) subunit alpha.